The chain runs to 155 residues: Transcription antitermination protein NusB (155 aa).

Belongs to the NusB family.

Its function is as follows. Involved in transcription antitermination. Required for transcription of ribosomal RNA (rRNA) genes. Binds specifically to the boxA antiterminator sequence of the ribosomal RNA (rrn) operons. The protein is Transcription antitermination protein NusB of Ralstonia nicotianae (strain ATCC BAA-1114 / GMI1000) (Ralstonia solanacearum).